We begin with the raw amino-acid sequence, 249 residues long: Phosphate import ATP-binding protein PstB 2 (249 aa).

The ABC transporter domain maps to isoleucine 4–isoleucine 244. Glycine 36–serine 43 lines the ATP pocket.

Belongs to the ABC transporter superfamily. Phosphate importer (TC 3.A.1.7) family. As to quaternary structure, the complex is composed of two ATP-binding proteins (PstB), two transmembrane proteins (PstC and PstA) and a solute-binding protein (PstS).

It is found in the cell membrane. It carries out the reaction phosphate(out) + ATP + H2O = ADP + 2 phosphate(in) + H(+). Functionally, part of the ABC transporter complex PstSACB involved in phosphate import. Responsible for energy coupling to the transport system. This Caldanaerobacter subterraneus subsp. tengcongensis (strain DSM 15242 / JCM 11007 / NBRC 100824 / MB4) (Thermoanaerobacter tengcongensis) protein is Phosphate import ATP-binding protein PstB 2.